The following is a 966-amino-acid chain: Alanine--tRNA ligase, cytoplasmic (966 aa).

Zn(2+) is bound by residues His-604, His-608, Cys-723, and His-727.

It belongs to the class-II aminoacyl-tRNA synthetase family. Monomer. The cofactor is Zn(2+).

It localises to the cytoplasm. It carries out the reaction tRNA(Ala) + L-alanine + ATP = L-alanyl-tRNA(Ala) + AMP + diphosphate. In terms of biological role, catalyzes the attachment of alanine to tRNA(Ala) in a two-step reaction: alanine is first activated by ATP to form Ala-AMP and then transferred to the acceptor end of tRNA(Ala). Also edits incorrectly charged tRNA(Ala) via its editing domain. This chain is Alanine--tRNA ligase, cytoplasmic, found in Drosophila melanogaster (Fruit fly).